A 398-amino-acid chain; its full sequence is Phosphoglycerate kinase (398 aa).

Substrate-binding positions include 23–25 (DLN), R38, 61–64 (HFGR), R120, and R153. ATP contacts are provided by residues K203, E325, and 355–358 (GGDT).

It belongs to the phosphoglycerate kinase family. In terms of assembly, monomer.

It is found in the cytoplasm. The catalysed reaction is (2R)-3-phosphoglycerate + ATP = (2R)-3-phospho-glyceroyl phosphate + ADP. The protein operates within carbohydrate degradation; glycolysis; pyruvate from D-glyceraldehyde 3-phosphate: step 2/5. The chain is Phosphoglycerate kinase from Chelativorans sp. (strain BNC1).